Consider the following 123-residue polypeptide: Probable non-functional immunoglobulin lambda variable 11-55 (123 aa).

The first 19 residues, 1–19 (MALTPLLLLLLSHCTGSLS), serve as a signal peptide directing secretion. The interval 20–44 (RPVLTQPPSLSASPGATARLPCTLS) is framework-1. An Ig-like domain is found at 21–123 (PVLTQPPSLS…YCQVYESSAN (103 aa)). Cys41 and Cys115 form a disulfide bridge. Residues 45–53 (SDLSVGGKN) are complementarity-determining-1. Positions 54 to 70 (MFWYQQKLGSSPRLFLY) are framework-2. The segment at 71-77 (HYSDSDK) is complementarity-determining-2. Positions 78 to 115 (QLGPGVPSRVSGSKETSSNTAFLLISGLQPEDEADYYC) are framework-3. Residues 116-123 (QVYESSAN) are complementarity-determining-3.

Immunoglobulins are composed of two identical heavy chains and two identical light chains; disulfide-linked.

Its subcellular location is the secreted. It is found in the cell membrane. Functionally, probable non-functional open reading frame (ORF) of V region of the variable domain of immunoglobulin light chains. Non-functional ORF generally cannot participate in the synthesis of a productive immunoglobulin chain due to altered V-(D)-J or switch recombination and/or splicing site (at mRNA level) and/or conserved amino acid change (protein level). Immunoglobulins, also known as antibodies, are membrane-bound or secreted glycoproteins produced by B lymphocytes. In the recognition phase of humoral immunity, the membrane-bound immunoglobulins serve as receptors which, upon binding of a specific antigen, trigger the clonal expansion and differentiation of B lymphocytes into immunoglobulins-secreting plasma cells. Secreted immunoglobulins mediate the effector phase of humoral immunity, which results in the elimination of bound antigens. The antigen binding site is formed by the variable domain of one heavy chain, together with that of its associated light chain. Thus, each immunoglobulin has two antigen binding sites with remarkable affinity for a particular antigen. The variable domains are assembled by a process called V-(D)-J rearrangement and can then be subjected to somatic hypermutations which, after exposure to antigen and selection, allow affinity maturation for a particular antigen. In Homo sapiens (Human), this protein is Probable non-functional immunoglobulin lambda variable 11-55.